We begin with the raw amino-acid sequence, 382 residues long: Queuine tRNA-ribosyltransferase (382 aa).

Residue Asp94 is the Proton acceptor of the active site. Residues 94–98 (DSGGF), Asp148, Gln192, and Gly219 contribute to the substrate site. Positions 250-256 (GVGKPED) are RNA binding. The Nucleophile role is filled by Asp269. The RNA binding; important for wobble base 34 recognition stretch occupies residues 274–278 (TRNAR). Zn(2+) contacts are provided by Cys307, Cys309, Cys312, and His338.

This sequence belongs to the queuine tRNA-ribosyltransferase family. Homodimer. Within each dimer, one monomer is responsible for RNA recognition and catalysis, while the other monomer binds to the replacement base PreQ1. The cofactor is Zn(2+).

The catalysed reaction is 7-aminomethyl-7-carbaguanine + guanosine(34) in tRNA = 7-aminomethyl-7-carbaguanosine(34) in tRNA + guanine. Its pathway is tRNA modification; tRNA-queuosine biosynthesis. Functionally, catalyzes the base-exchange of a guanine (G) residue with the queuine precursor 7-aminomethyl-7-deazaguanine (PreQ1) at position 34 (anticodon wobble position) in tRNAs with GU(N) anticodons (tRNA-Asp, -Asn, -His and -Tyr). Catalysis occurs through a double-displacement mechanism. The nucleophile active site attacks the C1' of nucleotide 34 to detach the guanine base from the RNA, forming a covalent enzyme-RNA intermediate. The proton acceptor active site deprotonates the incoming PreQ1, allowing a nucleophilic attack on the C1' of the ribose to form the product. After dissociation, two additional enzymatic reactions on the tRNA convert PreQ1 to queuine (Q), resulting in the hypermodified nucleoside queuosine (7-(((4,5-cis-dihydroxy-2-cyclopenten-1-yl)amino)methyl)-7-deazaguanosine). The protein is Queuine tRNA-ribosyltransferase of Haemophilus ducreyi (strain 35000HP / ATCC 700724).